Here is a 456-residue protein sequence, read N- to C-terminus: GTPase Der (456 aa).

2 consecutive EngA-type G domains span residues 4 to 169 (PIVA…PAVE) and 177 to 352 (IKVA…ESHK). GTP is bound by residues 10–17 (GRPNVGKS), 57–61 (DTGGL), 120–123 (NKCE), 183–190 (GRPNVGKS), 230–234 (DTAGI), and 295–298 (NKWD). The KH-like domain maps to 353 to 438 (RRVSTSVINE…PIILLWRSKK (86 aa)).

This sequence belongs to the TRAFAC class TrmE-Era-EngA-EngB-Septin-like GTPase superfamily. EngA (Der) GTPase family. As to quaternary structure, associates with the 50S ribosomal subunit.

Its function is as follows. GTPase that plays an essential role in the late steps of ribosome biogenesis. The chain is GTPase Der from Nostoc punctiforme (strain ATCC 29133 / PCC 73102).